The primary structure comprises 350 residues: Beta-hexosaminidase (350 aa).

Substrate is bound by residues Asp-62, Arg-70, Arg-133, and 163 to 164; that span reads KH. Catalysis depends on His-176, which acts as the Proton donor/acceptor. The Nucleophile role is filled by Asp-248.

The protein belongs to the glycosyl hydrolase 3 family. NagZ subfamily.

Its subcellular location is the cytoplasm. It catalyses the reaction Hydrolysis of terminal non-reducing N-acetyl-D-hexosamine residues in N-acetyl-beta-D-hexosaminides.. It participates in cell wall biogenesis; peptidoglycan recycling. Plays a role in peptidoglycan recycling by cleaving the terminal beta-1,4-linked N-acetylglucosamine (GlcNAc) from peptide-linked peptidoglycan fragments, giving rise to free GlcNAc, anhydro-N-acetylmuramic acid and anhydro-N-acetylmuramic acid-linked peptides. This chain is Beta-hexosaminidase, found in Haemophilus influenzae (strain PittEE).